Reading from the N-terminus, the 293-residue chain is N-acetylneuraminate lyase (293 aa).

Aceneuramate contacts are provided by S48 and S49. The active-site Proton donor is Y137. K165 functions as the Schiff-base intermediate with substrate in the catalytic mechanism. Aceneuramate contacts are provided by T167, G189, D191, E192, and S208.

This sequence belongs to the DapA family. NanA subfamily. In terms of assembly, homotetramer.

The protein localises to the cytoplasm. It carries out the reaction aceneuramate = aldehydo-N-acetyl-D-mannosamine + pyruvate. Its pathway is amino-sugar metabolism; N-acetylneuraminate degradation; D-fructose 6-phosphate from N-acetylneuraminate: step 1/5. Catalyzes the reversible aldol cleavage of N-acetylneuraminic acid (sialic acid; Neu5Ac) to form pyruvate and N-acetylmannosamine (ManNAc) via a Schiff base intermediate. The protein is N-acetylneuraminate lyase of Staphylococcus aureus (strain Mu3 / ATCC 700698).